The chain runs to 443 residues: Ribulose bisphosphate carboxylase large chain (443 aa).

N89 and T139 together coordinate substrate. The active-site Proton acceptor is the K141. Substrate is bound at residue K143. Positions 167, 169, and 170 each coordinate Mg(2+). N6-carboxylysine is present on K167. H260 acts as the Proton acceptor in catalysis. Substrate contacts are provided by R261, H293, and S345.

This sequence belongs to the RuBisCO large chain family. Type I subfamily. In terms of assembly, heterohexadecamer of 8 large chains and 8 small chains; disulfide-linked. The disulfide link is formed within the large subunit homodimers. Mg(2+) serves as cofactor. The disulfide bond which can form in the large chain dimeric partners within the hexadecamer appears to be associated with oxidative stress and protein turnover.

The protein resides in the plastid. It is found in the chloroplast. It carries out the reaction 2 (2R)-3-phosphoglycerate + 2 H(+) = D-ribulose 1,5-bisphosphate + CO2 + H2O. It catalyses the reaction D-ribulose 1,5-bisphosphate + O2 = 2-phosphoglycolate + (2R)-3-phosphoglycerate + 2 H(+). Functionally, ruBisCO catalyzes two reactions: the carboxylation of D-ribulose 1,5-bisphosphate, the primary event in carbon dioxide fixation, as well as the oxidative fragmentation of the pentose substrate in the photorespiration process. Both reactions occur simultaneously and in competition at the same active site. The sequence is that of Ribulose bisphosphate carboxylase large chain from Sesamum indicum (Oriental sesame).